The sequence spans 785 residues: Altered inheritance of mitochondria protein 3-2 (785 aa).

Disordered stretches follow at residues 33–122 (TGYQ…QPYM), 142–406 (QQVA…SENL), and 418–785 (NVDV…RLHK). Low complexity predominate over residues 91–102 (GSSGNSANGSSA). Polar residues-rich tracts occupy residues 103–122 (TIPTLSNTNNTAQLNEQPYM) and 143–199 (QVAT…QLNI). Residues 249-260 (KPYDWEEQKTTK) are compositionally biased toward basic and acidic residues. Polar residues-rich tracts occupy residues 283–310 (SRQGSNSTPPSRTHTGNNTSTASVTTTG), 350–366 (ATNNSSDLKLSGAQNTK), 375–388 (TNKSAERPNSSNVM), 395–405 (QMNTKANSSEN), and 455–465 (SSISRDNYNSI). Over residues 478–497 (NTGEREGAQELKADIAERSQ) the composition is skewed to basic and acidic residues. The span at 527–556 (AQTSSDIPQKSSLVTDESNISVPNKSQQPM) shows a compositional bias: polar residues. Basic and acidic residues-rich tracts occupy residues 587–613 (KSLEESHTPSNKLSEKPKPPKKPEQLK) and 624–637 (KNMKNKDQLFDNKN). Positions 659 to 671 (SLTSEGNHMNLNT) are enriched in polar residues. 2 stretches are compositionally biased toward basic and acidic residues: residues 672 to 686 (EKGKETTIEKPDESK) and 700 to 710 (FKREELSKEVV).

The protein belongs to the AIM3 family.

It is found in the membrane raft. This is Altered inheritance of mitochondria protein 3-2 (AIM3-2) from Candida glabrata (strain ATCC 2001 / BCRC 20586 / JCM 3761 / NBRC 0622 / NRRL Y-65 / CBS 138) (Yeast).